A 128-amino-acid polypeptide reads, in one-letter code: uncharacterized protein (128 aa).

This is an uncharacterized protein from Mycobacterium bovis (strain ATCC BAA-935 / AF2122/97).